A 416-amino-acid chain; its full sequence is Cell division protein FtsZ (416 aa).

GTP-binding positions include 20–24, 107–109, glutamate 138, arginine 142, and aspartate 186; these read GGGVN and GTG. Positions 319–335 are enriched in polar residues; the sequence is QETNANNSSPAQRQAES. Residues 319 to 416 form a disordered region; the sequence is QETNANNSSP…DSLDFPDFLK (98 aa). Over residues 376–392 the composition is skewed to acidic residues; sequence QDDDIPDDAGFDVDLPA. Basic and acidic residues predominate over residues 404–416; that stretch reads ARKDSLDFPDFLK.

This sequence belongs to the FtsZ family. In terms of assembly, homodimer. Polymerizes to form a dynamic ring structure in a strictly GTP-dependent manner. Interacts directly with several other division proteins.

The protein resides in the cytoplasm. Essential cell division protein that forms a contractile ring structure (Z ring) at the future cell division site. The regulation of the ring assembly controls the timing and the location of cell division. One of the functions of the FtsZ ring is to recruit other cell division proteins to the septum to produce a new cell wall between the dividing cells. Binds GTP and shows GTPase activity. This chain is Cell division protein FtsZ, found in Kocuria rhizophila (strain ATCC 9341 / DSM 348 / NBRC 103217 / DC2201).